A 384-amino-acid polypeptide reads, in one-letter code: Spermidine/putrescine import ATP-binding protein PotA (384 aa).

The region spanning 6–238 (ITFNNVSKTF…PINHFVANFI (233 aa)) is the ABC transporter domain. 40-47 (GASGSGKS) lines the ATP pocket.

Belongs to the ABC transporter superfamily. Spermidine/putrescine importer (TC 3.A.1.11.1) family. As to quaternary structure, the complex is composed of two ATP-binding proteins (PotA), two transmembrane proteins (PotB and PotC) and a solute-binding protein (PotD).

Its subcellular location is the cell membrane. It catalyses the reaction ATP + H2O + polyamine-[polyamine-binding protein]Side 1 = ADP + phosphate + polyamineSide 2 + [polyamine-binding protein]Side 1.. Part of the ABC transporter complex PotABCD involved in spermidine/putrescine import. Responsible for energy coupling to the transport system. This chain is Spermidine/putrescine import ATP-binding protein PotA, found in Streptococcus pyogenes serotype M28 (strain MGAS6180).